A 597-amino-acid polypeptide reads, in one-letter code: Elongation factor 4 (597 aa).

Residues 2 to 184 (KNIRNFSIIA…EIVAKIPAPT (183 aa)) form the tr-type G domain. GTP-binding positions include 14–19 (DHGKST) and 131–134 (NKID).

The protein belongs to the TRAFAC class translation factor GTPase superfamily. Classic translation factor GTPase family. LepA subfamily.

The protein localises to the cell inner membrane. The enzyme catalyses GTP + H2O = GDP + phosphate + H(+). Required for accurate and efficient protein synthesis under certain stress conditions. May act as a fidelity factor of the translation reaction, by catalyzing a one-codon backward translocation of tRNAs on improperly translocated ribosomes. Back-translocation proceeds from a post-translocation (POST) complex to a pre-translocation (PRE) complex, thus giving elongation factor G a second chance to translocate the tRNAs correctly. Binds to ribosomes in a GTP-dependent manner. The polypeptide is Elongation factor 4 (Neisseria gonorrhoeae (strain ATCC 700825 / FA 1090)).